The sequence spans 263 residues: Putative ankyrin repeat domain-containing protein 20A12 pseudogene (263 aa).

Coiled coils occupy residues 65–121 (KKDL…MLES) and 171–263 (NQVF…IQLH).

This is Putative ankyrin repeat domain-containing protein 20A12 pseudogene from Homo sapiens (Human).